Consider the following 162-residue polypeptide: Large ribosomal subunit protein uL15 (162 aa).

Residues 1–18 (MKLNEIRDNEGATKDRMR) show a composition bias toward basic and acidic residues. The tract at residues 1–42 (MKLNEIRDNEGATKDRMRVGRGIGSGKGKTAGRGVKGQKART) is disordered. Residues 21–35 (RGIGSGKGKTAGRGV) show a composition bias toward gly residues.

The protein belongs to the universal ribosomal protein uL15 family. Part of the 50S ribosomal subunit.

Binds to the 23S rRNA. This chain is Large ribosomal subunit protein uL15, found in Methylobacterium sp. (strain 4-46).